Reading from the N-terminus, the 198-residue chain is Outer-membrane lipoprotein carrier protein (198 aa).

The N-terminal stretch at 1-17 is a signal peptide; sequence MKKILLSLCFLSSVAFA.

The protein belongs to the LolA family. Monomer.

It is found in the periplasm. Its function is as follows. Participates in the translocation of lipoproteins from the inner membrane to the outer membrane. Only forms a complex with a lipoprotein if the residue after the N-terminal Cys is not an aspartate (The Asp acts as a targeting signal to indicate that the lipoprotein should stay in the inner membrane). In Aliivibrio salmonicida (strain LFI1238) (Vibrio salmonicida (strain LFI1238)), this protein is Outer-membrane lipoprotein carrier protein.